A 182-amino-acid chain; its full sequence is Interferon beta (182 aa).

The N-terminal stretch at 1–21 (MNNRWILHAAFLLCFSTTALS) is a signal peptide. Residue Tyr-24 is modified to Phosphotyrosine. N-linked (GlcNAc...) asparagine glycans are attached at residues Asn-50, Asn-90, and Asn-97.

The protein belongs to the alpha/beta interferon family. In terms of assembly, monomer. In terms of processing, this beta interferon does not have a disulfide bond.

The protein localises to the secreted. In terms of biological role, type I interferon cytokine that plays a key role in the innate immune response to infection, developing tumors and other inflammatory stimuli. Signals via binding to high-affinity (IFNAR2) and low-affinity (IFNAR1) heterodimeric receptor, activating the canonical Jak-STAT signaling pathway resulting in transcriptional activation or repression of interferon-regulated genes that encode the effectors of the interferon response, such as antiviral proteins, regulators of cell proliferation and differentiation, and immunoregulatory proteins. Signals mostly via binding to a IFNAR1-IFNAR2 heterodimeric receptor, but can also function with IFNAR1 alone and independently of Jak-STAT pathways. Elicits a wide variety of responses, including antiviral and antibacterial activities, and can regulate the development of B-cells, myelopoiesis and lipopolysaccharide (LPS)-inducible production of tumor necrosis factor. Plays a role in neuronal homeostasis by regulating dopamine turnover and protecting dopaminergic neurons: acts by promoting neuronal autophagy and alpha-synuclein clearance, thereby preventing dopaminergic neuron loss. IFNB1 is more potent than interferon-alpha (IFN-alpha) in inducing the apoptotic and antiproliferative pathways required for control of tumor cell growth. The sequence is that of Interferon beta from Mus musculus (Mouse).